Consider the following 261-residue polypeptide: THO complex subunit THP2 (261 aa).

Component of the THO complex, which is composed of HPR1, MFT1, THO2 and THP2. Together with SUB2, TEX1 and YRA1, THO forms the transcription/export (TREX) complex. THO associates with DNA and RNA in vitro.

Its subcellular location is the nucleus. Functionally, component the THO subcomplex of the TREX complex, which operates in coupling transcription elongation to mRNA export. The THO complex is recruited to transcribed genes and moves along the gene with the elongating polymerase during transcription. THO is important for stabilizing nascent RNA in the RNA polymerase II elongation complex by preventing formation of DNA:RNA hybrids behind the elongating polymerase. It functions in cotranscriptional formation of an export-competent messenger ribonucleoprotein particle (mRNP) by facilitating the loading of ATP-dependent RNA helicase SUB2 and the mRNA export factor YRA1 along the nascent mRNA. The sequence is that of THO complex subunit THP2 (THP2) from Saccharomyces cerevisiae (strain ATCC 204508 / S288c) (Baker's yeast).